A 494-amino-acid polypeptide reads, in one-letter code: Anaerobic nitric oxide reductase flavorubredoxin (494 aa).

Positions 30–210 (TKGTSYNSYL…PFSALVTAKI (181 aa)) are zinc metallo-hydrolase. Residues histidine 79, glutamate 81, aspartate 83, histidine 147, aspartate 166, and histidine 227 each contribute to the Fe cation site. Positions 254–393 (ITIFYDSMSN…ECREHGQQIA (140 aa)) constitute a Flavodoxin-like domain. FMN contacts are provided by residues 260–264 (SMSNN) and 342–369 (AFGS…ETAI). One can recognise a Rubredoxin-like domain in the interval 441–492 (CQCMVCTVCNWVYDPAKGEPNQGIEVGTTWADVPDYFLCPECHLGKDVFVEY). Fe cation is bound by residues cysteine 446, cysteine 449, cysteine 479, and cysteine 482.

This sequence in the N-terminal section; belongs to the zinc metallo-hydrolase group 3 family. In terms of assembly, homotetramer. It depends on Fe cation as a cofactor. FMN is required as a cofactor.

Its subcellular location is the cytoplasm. Its pathway is nitrogen metabolism; nitric oxide reduction. Functionally, anaerobic nitric oxide reductase; uses NADH to detoxify nitric oxide (NO), protecting several 4Fe-4S NO-sensitive enzymes. Has at least 2 reductase partners, only one of which (NorW, flavorubredoxin reductase) has been identified. NO probably binds to the di-iron center; electrons enter from the NorW at rubredoxin and are transferred sequentially to the FMN center and the di-iron center. Also able to function as an aerobic oxygen reductase. This is Anaerobic nitric oxide reductase flavorubredoxin from Vibrio vulnificus (strain YJ016).